The following is a 698-amino-acid chain: Probable xyloglucan glycosyltransferase 2 (698 aa).

Transmembrane regions (helical) follow at residues 124-144 and 190-210; these read GFLA…WNGW and ILLF…CFWI. Residue Asp-272 is part of the active site. Substrate-binding residues include Asp-331 and Asp-333. Asp-425 is a catalytic residue. 4 helical membrane passes run 503–523, 528–548, 653–668, and 673–693; these read LILP…TMFV, LPVW…ILPS, LALS…RSLL, and IHFY…LDLI.

The protein belongs to the glycosyltransferase 2 family. Plant cellulose synthase-like C subfamily.

The protein localises to the golgi apparatus membrane. In terms of biological role, probable beta-1,4-glucan synthase rather involved in the synthesis of the xyloglucan backbone than cellulose. Seems to work simultaneously with xyloglucan 6-xylosyltransferase. Xyloglucan is a noncellulosic polysaccharides of plant cell wall and consists of a glucan backbone substituted by xylose, galactose and fucose. The polypeptide is Probable xyloglucan glycosyltransferase 2 (CSLC2) (Oryza sativa subsp. japonica (Rice)).